A 394-amino-acid polypeptide reads, in one-letter code: MYTCGNRKVIPNMPDLILRKIFDQYDYPVLCKMERVCRRWTNIINSKFRKEIHEISIERLGSMFPQAHQCVPFRRLSISCPSDSHDFLAGVFRRSRLSFMKMTTDINFLAGIDQIHVSKDNGRRYFSNVEDLWLLMIHPDDDVTQRFLAIEGTLFSELQQLTLQVHVNPRYYKNVGEIVKSFILRYPKSNINLELHAEKSMHILNQISNLPSLPLYKIKLICTDFDQPQLRLDQLYAVMREQNIQAKNITMRDWSLFADGTTPVSYNPLDTFRISSCSIETVDNLVKSIQMTASQGTHVDGVPPTKKKKVIRKKKETEVVTEEGVLPKPKKKVVKKVVKKKKPIAFIKKLEVAGQCTLHGLTFLQQKAHTELERRLTTLVPGLDVDCSEIYYCW.

In terms of domain architecture, F-box spans 7-51 (RKVIPNMPDLILRKIFDQYDYPVLCKMERVCRRWTNIINSKFRKE).

This is an uncharacterized protein from Caenorhabditis elegans.